The following is a 182-amino-acid chain: MVPDENDDASDDQSSQLSGLLDQLHTLVEVLADIEEEGGHRHESGRIDRGNARIDYDYDVSIGLGRADGSSYDEEPSSNRSRSEQRSGQQRTTEDSIHVETRGGTSGDELVVVADLPGVTDDDVDVALDTDEQALTLRVDDDVVERVVLDRPDVAITDMTLRNQVLEIRLARTSDTDGGEST.

Acidic residues predominate over residues Met1–Asp11. Disordered regions lie at residues Met1–Leu21 and Gly65–Ser106. A compositionally biased stretch (low complexity) spans Asp12–Leu21. A compositionally biased stretch (basic and acidic residues) spans Thr92–Thr101.

Belongs to the gas vesicle GvpH family. As to quaternary structure, gvpF to GvpM interact with each other in vitro, and may form multi-subunit complex(es). Interacts with GvpC1. Might interact with GvpA1.

The protein localises to the cytoplasm. Its subcellular location is the gas vesicle. Its function is as follows. Proteins GvpF to GvpM might be involved in nucleating gas vesicle formation. May be important for the stability of gas vesicles. Gas vesicles are hollow, gas filled proteinaceous nanostructures found in several microbial planktonic microorganisms. They allow positioning of halobacteria at the optimal depth for growth in the poorly aerated, shallow brine pools of their habitat. Functionally, expression of a 9.5 kb p-vac DNA fragment containing 2 divergently transcribed regions (gvpD-gvpE-gvpF-gvpG-gvpH-gvpI-gvpJ-gvpK-gvpL-gvpM and gvpA-gvpC-gvpN-gvpO) allows H.volcanii to produce gas vesicles. A similar region restores gas vesicle production in H.halobium without the p-vac locus, but it still has the c-vac locus. The sequence is that of Gas vesicle protein H1 (gvpH11) from Halobacterium salinarum (strain ATCC 700922 / JCM 11081 / NRC-1) (Halobacterium halobium).